The sequence spans 284 residues: MTAQIIDGKAIAQSIRTQLREKVTARKEAGQRVPGLAVILVGADPASQVYVGSKRKACEEVGFISRSYDLDTSYTEEALLALIDELNDDPTIDGILVQLPLPAHIEDSKVIERIRPDKDVDGFHPYNVGRLAQRIPVLRSCTPMGIMTLIKSTGVDTYGLDAVVVGASNIVGRPMTLELLLAGCTTTTCHRFTKNLEQKIRQADLVVVAVGKPGFIPGEWIKPGAIVIDVGINRLENGTLVGDVQYDVAAQNASFITPVPGGVGPMTIASLLENTLYAAEQYHD.

NADP(+) is bound by residues 166–168 (GAS) and isoleucine 232.

It belongs to the tetrahydrofolate dehydrogenase/cyclohydrolase family. Homodimer.

It carries out the reaction (6R)-5,10-methylene-5,6,7,8-tetrahydrofolate + NADP(+) = (6R)-5,10-methenyltetrahydrofolate + NADPH. It catalyses the reaction (6R)-5,10-methenyltetrahydrofolate + H2O = (6R)-10-formyltetrahydrofolate + H(+). Its pathway is one-carbon metabolism; tetrahydrofolate interconversion. Functionally, catalyzes the oxidation of 5,10-methylenetetrahydrofolate to 5,10-methenyltetrahydrofolate and then the hydrolysis of 5,10-methenyltetrahydrofolate to 10-formyltetrahydrofolate. The protein is Bifunctional protein FolD of Shewanella sp. (strain ANA-3).